The following is a 224-amino-acid chain: C-&gt;U-editing enzyme APOBEC-2 (224 aa).

The segment at 1-23 (MAQKEEAAEAAAPASQNGDDLEN) is disordered. Zn(2+) contacts are provided by Glu-60 and His-98. A CMP/dCMP-type deaminase domain is found at 64 to 169 (GRNKTFLCYV…PEVQAALKKL (106 aa)). Glu-100 acts as the Proton donor in catalysis. Zn(2+)-binding residues include Cys-128 and Cys-131.

This sequence belongs to the cytidine and deoxycytidylate deaminase family. Homotetramer. Requires Zn(2+) as cofactor. As to expression, expressed exclusively in heart and skeletal muscle.

The enzyme catalyses cytidine(6666) in apoB mRNA + H2O + H(+) = uridine(6666) in apoB mRNA + NH4(+). Its function is as follows. Probable C to U editing enzyme whose physiological substrate is not yet known. Does not display detectable apoB mRNA editing. Has a low intrinsic cytidine deaminase activity. May play a role in the epigenetic regulation of gene expression through the process of active DNA demethylation. In Mus musculus (Mouse), this protein is C-&gt;U-editing enzyme APOBEC-2 (Apobec2).